The following is a 136-amino-acid chain: Large ribosomal subunit protein eL27 (136 aa).

Residues 5 to 36 (MKPGKVVLVLRGKYAGRKAVVVKQQDEGVSDR) enclose the KOW domain.

Belongs to the eukaryotic ribosomal protein eL27 family. As to quaternary structure, component of the large ribosomal subunit.

It localises to the cytoplasm. The protein localises to the cytosol. Its subcellular location is the rough endoplasmic reticulum. Functionally, component of the large ribosomal subunit. The protein is Large ribosomal subunit protein eL27 (rpl-27) of Caenorhabditis elegans.